The primary structure comprises 304 residues: Non-specific ribonucleoside hydrolase RihC (304 aa).

The active site involves His233.

This sequence belongs to the IUNH family. RihC subfamily.

Hydrolyzes both purine and pyrimidine ribonucleosides with a broad-substrate specificity. The protein is Non-specific ribonucleoside hydrolase RihC of Escherichia coli O127:H6 (strain E2348/69 / EPEC).